We begin with the raw amino-acid sequence, 376 residues long: Dual-specificity RNA methyltransferase RlmN (376 aa).

The Proton acceptor role is filled by Glu-95. Residues 101 to 339 (EKERATLCVS…CIVRRPRGDD (239 aa)) enclose the Radical SAM core domain. Cys-108 and Cys-344 are oxidised to a cystine. [4Fe-4S] cluster contacts are provided by Cys-115, Cys-119, and Cys-122. Residues 169 to 170 (GE), Ser-201, 223 to 225 (SLH), and Asn-301 contribute to the S-adenosyl-L-methionine site. The active-site S-methylcysteine intermediate is the Cys-344.

It belongs to the radical SAM superfamily. RlmN family. It depends on [4Fe-4S] cluster as a cofactor.

It localises to the cytoplasm. It carries out the reaction adenosine(2503) in 23S rRNA + 2 reduced [2Fe-2S]-[ferredoxin] + 2 S-adenosyl-L-methionine = 2-methyladenosine(2503) in 23S rRNA + 5'-deoxyadenosine + L-methionine + 2 oxidized [2Fe-2S]-[ferredoxin] + S-adenosyl-L-homocysteine. The enzyme catalyses adenosine(37) in tRNA + 2 reduced [2Fe-2S]-[ferredoxin] + 2 S-adenosyl-L-methionine = 2-methyladenosine(37) in tRNA + 5'-deoxyadenosine + L-methionine + 2 oxidized [2Fe-2S]-[ferredoxin] + S-adenosyl-L-homocysteine. Functionally, specifically methylates position 2 of adenine 2503 in 23S rRNA and position 2 of adenine 37 in tRNAs. m2A2503 modification seems to play a crucial role in the proofreading step occurring at the peptidyl transferase center and thus would serve to optimize ribosomal fidelity. In Pseudoalteromonas translucida (strain TAC 125), this protein is Dual-specificity RNA methyltransferase RlmN.